Reading from the N-terminus, the 86-residue chain is MSINIQEIIKEYQSKIGDTGSTNVQVALLTARIRHLTKHFKTHKKDHHSRRGLLHLVSQRKKLLTYLRGNNKTAYSKLISHLELRK.

This sequence belongs to the universal ribosomal protein uS15 family. Part of the 30S ribosomal subunit. Forms a bridge to the 50S subunit in the 70S ribosome, contacting the 23S rRNA.

One of the primary rRNA binding proteins, it binds directly to 16S rRNA where it helps nucleate assembly of the platform of the 30S subunit by binding and bridging several RNA helices of the 16S rRNA. In terms of biological role, forms an intersubunit bridge (bridge B4) with the 23S rRNA of the 50S subunit in the ribosome. This Vesicomyosocius okutanii subsp. Calyptogena okutanii (strain HA) protein is Small ribosomal subunit protein uS15.